The following is a 453-amino-acid chain: Gastrin/cholecystokinin type B receptor (453 aa).

The Extracellular portion of the chain corresponds to Met1–Arg57. Residues Asn7, Asn30, and Asn36 are each glycosylated (N-linked (GlcNAc...) asparagine). The chain crosses the membrane as a helical span at residues Ile58–Leu79. The Cytoplasmic segment spans residues Gly80–Thr87. A helical transmembrane segment spans residues Val88–Pro109. Over Phe110–Ser131 the chain is Extracellular. A disulfide bridge connects residues Cys127 and Cys205. The helical transmembrane segment at Tyr132 to Leu150 threads the bilayer. The Cytoplasmic segment spans residues Glu151 to His170. Residues Ala171–Tyr189 traverse the membrane as a helical segment. Residues Pro190 to Ser219 lie on the Extracellular side of the membrane. A helical transmembrane segment spans residues Val220–Ser242. Residues Arg243–Arg339 lie on the Cytoplasmic side of the membrane. The disordered stretch occupies residues Ser257–Pro276. Residues Met340 to Trp361 traverse the membrane as a helical segment. The Extracellular portion of the chain corresponds to Arg362–Ser379. A helical transmembrane segment spans residues Phe380 to His400. Topologically, residues Arg401–Gly453 are cytoplasmic. Residue Cys414 is the site of S-palmitoyl cysteine attachment.

It belongs to the G-protein coupled receptor 1 family.

The protein localises to the cell membrane. Its function is as follows. Receptor for gastrin and cholecystokinin. The CCK-B receptors occur throughout the central nervous system where they modulate anxiety, analgesia, arousal, and neuroleptic activity. This receptor mediates its action by association with G proteins that activate a phosphatidylinositol-calcium second messenger system. The sequence is that of Gastrin/cholecystokinin type B receptor (Cckbr) from Mus musculus (Mouse).